The primary structure comprises 445 residues: MDVREAIQQEAGAETGFASVTFNQDESCFSCANEQGFLVYNTFPLSLKLTKEFKQTPERGAGIGYSQMLYRTNYIALVGGGQRPRYSLNRVVIWDDLQQKESFSLKFMSIVRKVVLSRVHLVVALENELFIYSFHSTPKLLCPPIKTAPFGPFDFKVVTIEGKATDQAKVTSLLAYPSAKLTGQLHVADLSKLRSNQNNNQDMALTSESFLPTTIIKAHKAPIRNVRINNQGTMVATASRKGTLIRIFSTHNGILLKEFRRGLDRAEIYDMCFSPLGTRLAVVSDKQTLHVFQIAPMAEGTLNPANPEDHQSSGSNGHIKANTNQVHSLRNIVPTSWKPKYLDSVWSMCKVHLRNPKLRNNVNDLAFNEDRCTIAWCRQNRSHTFKNGNHFNENEENKLVLVWKNSRIWEKYVILEKEAPNSNDGIKGPSPLTEWELVRESWREL.

WD repeat units lie at residues 218 to 258 (AHKA…LLKE) and 263 to 302 (LDRAEIYDMCFSPLGTRLAVVSDKQTLHVFQIAPMAEGTL). The segment at 301–321 (TLNPANPEDHQSSGSNGHIKA) is disordered. Positions 312 to 321 (SSGSNGHIKA) are enriched in polar residues.

Belongs to the WD repeat PROPPIN family.

The protein resides in the vacuole membrane. The protein localises to the cytoplasmic vesicle membrane. Involved in mitochondrial or peroxisomal functions and amino acid signaling pathways. The sequence is that of SVP1-like protein 2 (HSV2) from Candida glabrata (strain ATCC 2001 / BCRC 20586 / JCM 3761 / NBRC 0622 / NRRL Y-65 / CBS 138) (Yeast).